Here is a 199-residue protein sequence, read N- to C-terminus: Thymidylate kinase (199 aa).

7–14 (GTEGVGKT) contributes to the ATP binding site.

It belongs to the thymidylate kinase family.

It catalyses the reaction dTMP + ATP = dTDP + ADP. Functionally, phosphorylation of dTMP to form dTDP in both de novo and salvage pathways of dTTP synthesis. In Acinetobacter baumannii (strain ATCC 17978 / DSM 105126 / CIP 53.77 / LMG 1025 / NCDC KC755 / 5377), this protein is Thymidylate kinase.